Consider the following 235-residue polypeptide: Enolase-phosphatase E1 (235 aa).

It belongs to the HAD-like hydrolase superfamily. MasA/MtnC family. Monomer. The cofactor is Mg(2+).

The catalysed reaction is 5-methylsulfanyl-2,3-dioxopentyl phosphate + H2O = 1,2-dihydroxy-5-(methylsulfanyl)pent-1-en-3-one + phosphate. It functions in the pathway amino-acid biosynthesis; L-methionine biosynthesis via salvage pathway; L-methionine from S-methyl-5-thio-alpha-D-ribose 1-phosphate: step 3/6. It participates in amino-acid biosynthesis; L-methionine biosynthesis via salvage pathway; L-methionine from S-methyl-5-thio-alpha-D-ribose 1-phosphate: step 4/6. Bifunctional enzyme that catalyzes the enolization of 2,3-diketo-5-methylthiopentyl-1-phosphate (DK-MTP-1-P) into the intermediate 2-hydroxy-3-keto-5-methylthiopentenyl-1-phosphate (HK-MTPenyl-1-P), which is then dephosphorylated to form the acireductone 1,2-dihydroxy-3-keto-5-methylthiopentene (DHK-MTPene). The protein is Enolase-phosphatase E1 of Gluconacetobacter diazotrophicus (strain ATCC 49037 / DSM 5601 / CCUG 37298 / CIP 103539 / LMG 7603 / PAl5).